Here is a 413-residue protein sequence, read N- to C-terminus: MKSYLVGGAVRDALLGLPVKDRDWVVVGATPQQMLDAGYQQVGRDFPVFLHPQSREEYALARTERKSGAGYTGFTCYAAPDVTLEADLLRRDLTVNALAQDADGTIIDPYGGQNDLRLRLLRHVSPAFSEDPLRVLRVARFAARYAHLGFRIAEETQALMHAMVEAGELAHLTPERVWKETESALTTRNPQVFFQTLRDCQALKVLFPEIDALYGVPAPAKWHPEIDTGLHTLMTVTMAAMLSPDVDVRFATLCHDLGKGLTPKALWPRHHGHGPAGVKLVEQLCARLRVPNDIRDLAKLVAEYHDLIHTLPILQPKTLVKLFDSIDAWRKPQRVQQIALTSEADVRGRTGFEASDYPQGRLLLEAWEVAQSVSTKEVVAAGFKGAQIREELTRRRIAAVAQWKEQRCPQPQG.

Residues glycine 8 and arginine 11 each coordinate ATP. Positions 8 and 11 each coordinate CTP. 2 residues coordinate Mg(2+): aspartate 21 and aspartate 23. 3 residues coordinate ATP: arginine 91, arginine 137, and arginine 140. 3 residues coordinate CTP: arginine 91, arginine 137, and arginine 140. The HD domain occupies 228 to 329 (TGLHTLMTVT…VKLFDSIDAW (102 aa)).

It belongs to the tRNA nucleotidyltransferase/poly(A) polymerase family. Bacterial CCA-adding enzyme type 1 subfamily. In terms of assembly, monomer. Can also form homodimers and oligomers. Requires Mg(2+) as cofactor. The cofactor is Ni(2+).

The enzyme catalyses a tRNA precursor + 2 CTP + ATP = a tRNA with a 3' CCA end + 3 diphosphate. The catalysed reaction is a tRNA with a 3' CCA end + 2 CTP + ATP = a tRNA with a 3' CCACCA end + 3 diphosphate. Catalyzes the addition and repair of the essential 3'-terminal CCA sequence in tRNAs without using a nucleic acid template. Adds these three nucleotides in the order of C, C, and A to the tRNA nucleotide-73, using CTP and ATP as substrates and producing inorganic pyrophosphate. tRNA 3'-terminal CCA addition is required both for tRNA processing and repair. Also involved in tRNA surveillance by mediating tandem CCA addition to generate a CCACCA at the 3' terminus of unstable tRNAs. While stable tRNAs receive only 3'-terminal CCA, unstable tRNAs are marked with CCACCA and rapidly degraded. In Klebsiella pneumoniae (strain 342), this protein is Multifunctional CCA protein.